The chain runs to 327 residues: Sideroflexin FSF1 (327 aa).

Ala2 bears the N-acetylalanine mark. 4 consecutive transmembrane segments (helical) span residues 98-118, 143-163, 179-199, and 272-292; these read NLVV…TVFW, SQLL…ALGL, LILG…VNVF, and ANLG…LGIF.

It belongs to the sideroflexin family.

It is found in the mitochondrion membrane. In terms of biological role, mitochondrial amino-acid transporter that mediates transport of serine into mitochondria. This Saccharomyces cerevisiae (strain ATCC 204508 / S288c) (Baker's yeast) protein is Sideroflexin FSF1.